A 145-amino-acid chain; its full sequence is uncharacterized protein (145 aa).

Substrate contacts are provided by valine 97 and asparagine 121.

It belongs to the D-isomer specific 2-hydroxyacid dehydrogenase family. FDH subfamily.

This is an uncharacterized protein from Saccharomyces cerevisiae (strain ATCC 204508 / S288c) (Baker's yeast).